The sequence spans 428 residues: MFVDQVQVEVQAGKGGDGMVAFRREKFVPFGGPAGGDGGHGGSIILYVDEGLRTLMDFRYQRHFKASAGGNGQGKQMYGRAAEDRRIAVPAGTTVTDADTGEVLGDLTEPGQTLVVAKGGRGGRGNMHFVSPKNTAPEISENGEPGEHRFIKLELKVLADVGLVGFPSVGKSTLLSVVTQAKPKIAAYQFTTLVPNLGMVQLDDGTDFVMADLPGLIEGASQGVGLGIQFLRHVERTRVLLHLVEMDPDNGREPLDDYDQIRKELGAYDDNILKRPELVVATKMDLPGAAERFADFKAALLARGVAADHIFEISSLTHRGVTPLMHKTAEVLKTAPHFEPEQAAVKTADYKYQPEPALKVTRDSDGTFVLTGDKIERAFKMANLDHEDGAMRFARQLRSMGVDDALRDAGAESGDLVAIDDFTFEFVE.

The Obg domain maps to 1 to 158 (MFVDQVQVEV…RFIKLELKVL (158 aa)). The OBG-type G domain maps to 159 to 333 (ADVGLVGFPS…LMHKTAEVLK (175 aa)). GTP-binding positions include 165–172 (GFPSVGKS), 190–194 (FTTLV), 212–215 (DLPG), 282–285 (TKMD), and 314–316 (SSL). Mg(2+) is bound by residues Ser-172 and Thr-192. The region spanning 350 to 428 (YKYQPEPALK…IDDFTFEFVE (79 aa)) is the OCT domain.

The protein belongs to the TRAFAC class OBG-HflX-like GTPase superfamily. OBG GTPase family. As to quaternary structure, monomer. Mg(2+) is required as a cofactor.

It localises to the cytoplasm. Functionally, an essential GTPase which binds GTP, GDP and possibly (p)ppGpp with moderate affinity, with high nucleotide exchange rates and a fairly low GTP hydrolysis rate. Plays a role in control of the cell cycle, stress response, ribosome biogenesis and in those bacteria that undergo differentiation, in morphogenesis control. The polypeptide is GTPase Obg (Lacticaseibacillus casei (strain BL23) (Lactobacillus casei)).